A 715-amino-acid polypeptide reads, in one-letter code: Formate dehydrogenase H (715 aa).

The region spanning 1–56 (MKKVVTVCPYCASGCKINLVVDNGKIVRAEAAQGKTNQGTLCLKGYYGWDFINDTQ) is the 4Fe-4S Mo/W bis-MGD-type domain. Residues Cys-8, Cys-11, Cys-15, and Cys-42 each coordinate [4Fe-4S] cluster. Residue Lys-44 is the Electron donor/acceptor of the active site. Arg-110, Sec-140, Asn-176, Asp-179, Ser-180, Cys-201, Asp-202, Arg-204, Gly-221, Asn-223, Met-297, Gln-335, Asp-404, Thr-408, Gln-428, Asp-429, Ser-445, Asp-478, Arg-581, Glu-582, His-585, Ser-587, Tyr-678, and Lys-679 together coordinate Mo-bis(molybdopterin guanine dinucleotide). The Proton donor/acceptor role is filled by Sec-140. A non-standard amino acid (selenocysteine) is located at residue Sec-140.

Belongs to the prokaryotic molybdopterin-containing oxidoreductase family. Consists of two separable enzymatic activities: a formate dehydrogenase component (FDH-H) and hydrogenase-3. The cofactor is [4Fe-4S] cluster. It depends on Mo-bis(molybdopterin guanine dinucleotide) as a cofactor.

The catalysed reaction is formate + A + H(+) = AH2 + CO2. Its activity is regulated as follows. Inhibited by aerobic conditions. Decomposes formic acid to hydrogen and carbon dioxide under anaerobic conditions in the absence of exogenous electron acceptors. In Escherichia coli (strain K12), this protein is Formate dehydrogenase H (fdhF).